A 1546-amino-acid chain; its full sequence is Lysophospholipase NTE1 (1546 aa).

Residues 1–45 (MKDSTEALNSIAFAVDTTLSSILPSSLAPPSAPPATSSFLKSIWY) lie on the Cytoplasmic side of the membrane. A helical membrane pass occupies residues 46 to 66 (AFWWLWSMVVFKIMNIILLYI). Over 67–81 (PSKIMNALSINFEIT) the chain is Lumenal. The chain crosses the membrane as a helical span at residues 82–102 (LNLSSILVALSAIITVCFLVV). At 103 to 1546 (RYKYLTGYSK…KKVLYRRNSI (1444 aa)) the chain is on the cytoplasmic side. A nucleoside 3',5'-cyclic phosphate is bound by residues 689–820 (PTEF…LKKL) and 816–965 (KLKK…VASK). The PNPLA domain maps to 1239–1403 (LVLGGGGSRG…LDNLPVSEMK (165 aa)). Positions 1243 to 1248 (GGGSRG) match the GXGXXG motif. The short motif at 1270–1274 (GTSIG) is the GXSXG element. The active-site Nucleophile is Ser-1272. Asp-1390 acts as the Proton acceptor in catalysis. The short motif at 1390–1392 (DGG) is the DGA/G element.

Belongs to the NTE family.

It localises to the endoplasmic reticulum membrane. The enzyme catalyses a 1-acyl-sn-glycero-3-phosphocholine + H2O = sn-glycerol 3-phosphocholine + a fatty acid + H(+). Its activity is regulated as follows. Inhibited by organophosphorus esters. In terms of biological role, intracellular phospholipase B that catalyzes the double deacylation of phosphatidylcholine (PC) to glycerophosphocholine (GroPCho). Plays an important role in membrane lipid homeostasis. Responsible for the rapid PC turnover in response to inositol, elevated temperatures, or when choline is present in the growth medium. The chain is Lysophospholipase NTE1 (NTE1) from Scheffersomyces stipitis (strain ATCC 58785 / CBS 6054 / NBRC 10063 / NRRL Y-11545) (Yeast).